A 242-amino-acid polypeptide reads, in one-letter code: Large ribosomal subunit protein uL1 (242 aa).

The protein belongs to the universal ribosomal protein uL1 family. As to quaternary structure, part of the 50S ribosomal subunit.

In terms of biological role, binds directly to 23S rRNA. The L1 stalk is quite mobile in the ribosome, and is involved in E site tRNA release. Functionally, protein L1 is also a translational repressor protein, it controls the translation of the L11 operon by binding to its mRNA. This Sulfurihydrogenibium sp. (strain YO3AOP1) protein is Large ribosomal subunit protein uL1.